We begin with the raw amino-acid sequence, 59 residues long: Protein translocase subunit SecE (59 aa).

A helical membrane pass occupies residues 30–50 (ITVITTVIFFAIFFALIDSGI).

It belongs to the SecE/SEC61-gamma family. In terms of assembly, component of the Sec protein translocase complex. Heterotrimer consisting of SecY, SecE and SecG subunits. The heterotrimers can form oligomers, although 1 heterotrimer is thought to be able to translocate proteins. Interacts with the ribosome. Interacts with SecDF, and other proteins may be involved. Interacts with SecA.

It localises to the cell membrane. Essential subunit of the Sec protein translocation channel SecYEG. Clamps together the 2 halves of SecY. May contact the channel plug during translocation. The protein is Protein translocase subunit SecE of Bacillus licheniformis.